Here is an 87-residue protein sequence, read N- to C-terminus: MNLEPPKGEIRSATRVIGGPVTPRKGPPKFKQRQTRQFKSKPPKKGVQGFGDDIPGMEGLGTDITVICPWEAFNHLELHELAQYGII.

N-acetylmethionine is present on M1. The segment covering 1 to 12 (MNLEPPKGEIRS) has biased composition (basic and acidic residues). The interval 1-55 (MNLEPPKGEIRSATRVIGGPVTPRKGPPKFKQRQTRQFKSKPPKKGVQGFGDDIP) is disordered. Positions 26-44 (GPPKFKQRQTRQFKSKPPK) are enriched in basic residues.

The protein belongs to the rod/cone cGMP-PDE gamma subunit family. Oligomer composed of two catalytic chains (alpha and beta), an inhibitory chain (gamma) and the delta chain.

The catalysed reaction is 3',5'-cyclic GMP + H2O = GMP + H(+). Its function is as follows. Participates in processes of transmission and amplification of the visual signal. cGMP-PDEs are the effector molecules in G-protein-mediated phototransduction in vertebrate rods and cones. This is Retinal rod rhodopsin-sensitive cGMP 3',5'-cyclic phosphodiesterase subunit gamma (Pde6g) from Mus musculus (Mouse).